A 228-amino-acid chain; its full sequence is Ribose-5-phosphate isomerase A (228 aa).

Substrate is bound by residues 32–35, 85–88, and 98–101; these read TGST, DGAD, and KGGG. The active-site Proton acceptor is the Glu-107. Lys-125 contributes to the substrate binding site.

It belongs to the ribose 5-phosphate isomerase family. Homodimer.

It carries out the reaction aldehydo-D-ribose 5-phosphate = D-ribulose 5-phosphate. Its pathway is carbohydrate degradation; pentose phosphate pathway; D-ribose 5-phosphate from D-ribulose 5-phosphate (non-oxidative stage): step 1/1. Catalyzes the reversible conversion of ribose-5-phosphate to ribulose 5-phosphate. This chain is Ribose-5-phosphate isomerase A, found in Ralstonia pickettii (strain 12J).